The primary structure comprises 76 residues: ATP synthase subunit c (76 aa).

2 consecutive transmembrane segments (helical) span residues 7-27 (VATALAVGLGAIGPGVGIGII) and 50-70 (FIGIAFTEALAIFGLVIAFLI).

This sequence belongs to the ATPase C chain family. As to quaternary structure, F-type ATPases have 2 components, F(1) - the catalytic core - and F(0) - the membrane proton channel. F(1) has five subunits: alpha(3), beta(3), gamma(1), delta(1), epsilon(1). F(0) has four main subunits: a(1), b(1), b'(1) and c(10-14). The alpha and beta chains form an alternating ring which encloses part of the gamma chain. F(1) is attached to F(0) by a central stalk formed by the gamma and epsilon chains, while a peripheral stalk is formed by the delta, b and b' chains.

Its subcellular location is the cell membrane. Its function is as follows. F(1)F(0) ATP synthase produces ATP from ADP in the presence of a proton or sodium gradient. F-type ATPases consist of two structural domains, F(1) containing the extramembraneous catalytic core and F(0) containing the membrane proton channel, linked together by a central stalk and a peripheral stalk. During catalysis, ATP synthesis in the catalytic domain of F(1) is coupled via a rotary mechanism of the central stalk subunits to proton translocation. Key component of the F(0) channel; it plays a direct role in translocation across the membrane. A homomeric c-ring of between 10-14 subunits forms the central stalk rotor element with the F(1) delta and epsilon subunits. This chain is ATP synthase subunit c, found in Chloroflexus aurantiacus (strain ATCC 29366 / DSM 635 / J-10-fl).